Consider the following 431-residue polypeptide: Glutamate--tRNA ligase 1 (431 aa).

The 'HIGH' region motif lies at 11–21 (PSPTGDLHLGG). Residues 203-207 (KLSKR) carry the 'KMSKS' region motif. An ATP-binding site is contributed by Lys-206.

This sequence belongs to the class-I aminoacyl-tRNA synthetase family. Glutamate--tRNA ligase type 1 subfamily. In terms of assembly, monomer.

It is found in the cytoplasm. It catalyses the reaction tRNA(Glu) + L-glutamate + ATP = L-glutamyl-tRNA(Glu) + AMP + diphosphate. Functionally, catalyzes the attachment of glutamate to tRNA(Glu) in a two-step reaction: glutamate is first activated by ATP to form Glu-AMP and then transferred to the acceptor end of tRNA(Glu). The sequence is that of Glutamate--tRNA ligase 1 from Rubrobacter xylanophilus (strain DSM 9941 / JCM 11954 / NBRC 16129 / PRD-1).